Here is a 395-residue protein sequence, read N- to C-terminus: Ketoisovalerate oxidoreductase subunit VorA (395 aa).

In terms of assembly, heterotetramer of one alpha, one beta, one delta and one gamma chain.

The enzyme catalyses 3-methyl-2-oxobutanoate + 2 oxidized [2Fe-2S]-[ferredoxin] + CoA = 2-methylpropanoyl-CoA + 2 reduced [2Fe-2S]-[ferredoxin] + CO2 + H(+). The chain is Ketoisovalerate oxidoreductase subunit VorA (vorA) from Pyrococcus abyssi (strain GE5 / Orsay).